We begin with the raw amino-acid sequence, 160 residues long: Protein Vago (160 aa).

Positions methionine 1–alanine 23 are cleaved as a signal peptide.

In terms of tissue distribution, expressed in fat body.

It is found in the secreted. Its function is as follows. Probably involved in the antiviral immune response. May have a role in controlling viral load in the adult fat body, after infection with viruses such as the Drosophila C virus. This chain is Protein Vago, found in Drosophila melanogaster (Fruit fly).